Reading from the N-terminus, the 139-residue chain is MGMLNEFKAFAVKGNVVDMAVGIIIGAAFGKIVSSFVGDVIMPPLGLLIGGVDFSDLAITLKAAEGDVPAVVLAYGKFIQTVIDFVIVAFAIFMGVKAINRLKREEAVAPTTPPVPSAEETLLTEIRDLLKTQNQNRLP.

Transmembrane regions (helical) follow at residues 9–29 and 79–99; these read AFAVKGNVVDMAVGIIIGAAF and IQTVIDFVIVAFAIFMGVKAI.

The protein belongs to the MscL family. In terms of assembly, homopentamer.

Its subcellular location is the cell inner membrane. In terms of biological role, channel that opens in response to stretch forces in the membrane lipid bilayer. May participate in the regulation of osmotic pressure changes within the cell. This chain is Large-conductance mechanosensitive channel, found in Pseudomonas putida (strain GB-1).